The primary structure comprises 505 residues: Lysine--tRNA ligase (505 aa).

Mg(2+) is bound by residues Glu-415 and Glu-422.

The protein belongs to the class-II aminoacyl-tRNA synthetase family. In terms of assembly, homodimer. Mg(2+) serves as cofactor.

It is found in the cytoplasm. The catalysed reaction is tRNA(Lys) + L-lysine + ATP = L-lysyl-tRNA(Lys) + AMP + diphosphate. The sequence is that of Lysine--tRNA ligase from Cronobacter sakazakii (strain ATCC BAA-894) (Enterobacter sakazakii).